Reading from the N-terminus, the 474-residue chain is 2-succinylbenzoate--CoA ligase (474 aa).

It belongs to the ATP-dependent AMP-binding enzyme family. MenE subfamily.

The catalysed reaction is 2-succinylbenzoate + ATP + CoA = 2-succinylbenzoyl-CoA + AMP + diphosphate. It functions in the pathway quinol/quinone metabolism; 1,4-dihydroxy-2-naphthoate biosynthesis; 1,4-dihydroxy-2-naphthoate from chorismate: step 5/7. The protein operates within quinol/quinone metabolism; menaquinone biosynthesis. Its function is as follows. Converts 2-succinylbenzoate (OSB) to 2-succinylbenzoyl-CoA (OSB-CoA). The chain is 2-succinylbenzoate--CoA ligase from Staphylococcus epidermidis (strain ATCC 12228 / FDA PCI 1200).